The following is a 463-amino-acid chain: L-seryl-tRNA(Sec) selenium transferase (463 aa).

K295 is modified (N6-(pyridoxal phosphate)lysine).

It belongs to the SelA family. In terms of assembly, homodecamer; pentamer of dimers. Binds only one seryl-tRNA(Sec) per dimer. Requires pyridoxal 5'-phosphate as cofactor.

The protein resides in the cytoplasm. It catalyses the reaction L-seryl-tRNA(Sec) + selenophosphate + H(+) = L-selenocysteinyl-tRNA(Sec) + phosphate. The protein operates within aminoacyl-tRNA biosynthesis; selenocysteinyl-tRNA(Sec) biosynthesis; selenocysteinyl-tRNA(Sec) from L-seryl-tRNA(Sec) (bacterial route): step 1/1. In terms of biological role, converts seryl-tRNA(Sec) to selenocysteinyl-tRNA(Sec) required for selenoprotein biosynthesis. This chain is L-seryl-tRNA(Sec) selenium transferase, found in Salmonella arizonae (strain ATCC BAA-731 / CDC346-86 / RSK2980).